The chain runs to 616 residues: RNA-directed RNA polymerase (616 aa).

The catalysed reaction is RNA(n) + a ribonucleoside 5'-triphosphate = RNA(n+1) + diphosphate. RNA-dependent RNA polymerase which replicates the viral genome. The chain is RNA-directed RNA polymerase from White clover cryptic virus 1 (isolate Boccardo/2004) (WCCV-1).